A 612-amino-acid chain; its full sequence is MPDYRSKTSTHGRNMAGARALWRATGMKDEDFKKPIIAIANSFTQFVPGHVHLKDLGQLVAREIEKHGGVAKEFNTIAVDDGIAMGHDGMLYSLPSREIIADSVEYMVNAHCADAIVCISNCDKITPGMLMAALRLNIPVVFVSGGPMEAGKTKLANHGLDLVDAMVVAADDSCSDEKVAEYERSACPTCGSCSGMFTANSMNCLTEALGLSLPGNGSTLATHADREQLFLRAGRLVVELCQRYYGEGDESVLPRNVASFKAFENAMTLDIAMGGSTNTILHLLAAAQEAELAFDLRDIDRLSRKVPQLCKVAPNIQKYHMEDVHRAGGIFSILGELARGGLLHTDVPTVHSPSMADAIAQWDITQTRDEKVHTFFKAGPAGIPTQVAFSQSTRWDTLDDDRENGCIRSVEHAYSQEGGLAVLYGNIALDGCVVKTAGVDESIHVFEGTAKIFESQDSAVKGILADEVKAGDIVIIRYEGPKGGPGMQEMLYPTSYLKSKGLGKVCALLTDGRFSGGTSGLSIGHASPEAAAGGAIGLVKDGDKVLIDIPNRSINLLVSDEELAVRRAEQDKKGWKPVQPRARKVSTALKAYALLATSADKGAVRDKAMLDG.

Mg(2+) is bound at residue D81. C122 contributes to the [2Fe-2S] cluster binding site. The Mg(2+) site is built by D123 and K124. Position 124 is an N6-carboxylysine (K124). Residue C193 participates in [2Fe-2S] cluster binding. Residue E489 participates in Mg(2+) binding. S515 (proton acceptor) is an active-site residue.

This sequence belongs to the IlvD/Edd family. As to quaternary structure, homodimer. [2Fe-2S] cluster serves as cofactor. It depends on Mg(2+) as a cofactor.

The enzyme catalyses (2R)-2,3-dihydroxy-3-methylbutanoate = 3-methyl-2-oxobutanoate + H2O. It catalyses the reaction (2R,3R)-2,3-dihydroxy-3-methylpentanoate = (S)-3-methyl-2-oxopentanoate + H2O. It participates in amino-acid biosynthesis; L-isoleucine biosynthesis; L-isoleucine from 2-oxobutanoate: step 3/4. Its pathway is amino-acid biosynthesis; L-valine biosynthesis; L-valine from pyruvate: step 3/4. Functions in the biosynthesis of branched-chain amino acids. Catalyzes the dehydration of (2R,3R)-2,3-dihydroxy-3-methylpentanoate (2,3-dihydroxy-3-methylvalerate) into 2-oxo-3-methylpentanoate (2-oxo-3-methylvalerate) and of (2R)-2,3-dihydroxy-3-methylbutanoate (2,3-dihydroxyisovalerate) into 2-oxo-3-methylbutanoate (2-oxoisovalerate), the penultimate precursor to L-isoleucine and L-valine, respectively. This is Dihydroxy-acid dehydratase from Ectopseudomonas mendocina (strain ymp) (Pseudomonas mendocina).